The primary structure comprises 424 residues: Attachment protein G3P (424 aa).

Positions 1 to 18 are cleaved as a signal peptide; it reads MKKLLFAIPLVVPFYSHS. The interval 19–85 is N1; sequence AETVESCLAK…VPIGLAIPEN (67 aa). 2 disulfides stabilise this stretch: C25–C54 and C64–C71. Positions 83–147 are disordered; sequence PENEGGGSEG…NPNPSLEESQ (65 aa). The tract at residues 86–104 is G1 (Gly-rich linker); it reads EGGGSEGGGSEGGGSEGGG. A compositionally biased stretch (gly residues) spans 86–105; the sequence is EGGGSEGGGSEGGGSEGGGT. Residues 105 to 141 are hinge; sequence TKPPEYGDTPIPGYTYINPLDGTYPPGTEQNPANPNP. Residues 132–147 show a composition bias toward polar residues; sequence TEQNPANPNPSLEESQ. The tract at residues 142–228 is N2; it reads SLEESQPLNT…CEYQGQSSDL (87 aa). C206 and C219 are joined by a disulfide. Residues 222–279 are disordered; that stretch reads QGQSSDLPQPPVNAGGGSGGGSGGGSEGGGSEGGGSEGGGSEGGGSGGGSGSGDFDYE. A compositionally biased stretch (gly residues) spans 235–273; the sequence is AGGGSGGGSGGGSEGGGSEGGGSEGGGSEGGGSGGGSGS. Residues 236–274 form a G2 (Gly-rich linker) region; the sequence is GGGSGGGSGGGSEGGGSEGGGSEGGGSEGGGSGGGSGSG. The segment at 253–262 is not essential for gene 3 function; that stretch reads EGGGSEGGGS. Residues 275–424 are CT; the sequence is DFDYEKMANA…FANILRNKES (150 aa). Residues 398-418 traverse the membrane as a helical segment; sequence VFAFLLYVATFMYVFSTFANI.

Belongs to the inovirus G3P protein family. In terms of assembly, interacts with G6P; this interaction is required for proper integration of G3P and G6P into the virion. Interacts with G8P. Interacts with the tip of the host pilus. Interacts (via N-terminus) with host TolA. Interacts (via transmembrane domain) with host TolQ (via 2nd and 3rd transmembrane domains); this interaction allows the phage translocation across the host inner membrane. Interacts (via transmembrane domain) with host TolR (via transmembrane domain); this interaction allows the phage translocation across the host inner membrane.

The protein localises to the virion. Its subcellular location is the host membrane. Plays essential roles both in the penetration of the viral genome into the bacterial host via pilus retraction and in the extrusion process. During the initial step of infection, G3P mediates adsorption of the phage to its primary receptor, the tip of host F-pilus. Attachment of the phage causes pilus retraction bringing the viral particle into close proximity of the host cell inner membrane. Binding to the host pilus initiates a change in the G3P conformation, allowing subsequent interaction with the host entry receptors tolA, TolQ and TolR and penetration of the viral DNA into the host cytoplasm. In the extrusion process, G3P mediates the release of the membrane-anchored virion from the cell via its C-terminal domain. In Enterobacteria phage f1 (Bacteriophage f1), this protein is Attachment protein G3P (III).